The sequence spans 834 residues: Putative COX1/OXI3 intron 1 protein (834 aa).

Positions methionine 162–glycine 188 are disordered. Positions asparagine 167–glycine 181 are enriched in polar residues. Residues leucine 296–isoleucine 577 enclose the Reverse transcriptase domain.

The protein localises to the mitochondrion. This Saccharomyces cerevisiae (strain ATCC 204508 / S288c) (Baker's yeast) protein is Putative COX1/OXI3 intron 1 protein (AI1).